The sequence spans 274 residues: F-box protein SKIP5 (274 aa).

The region spanning 32–79 (LTSLNNLDDGCLMHILSFLSPIPDRYNTALVCHRWRYLACHPRLWLRV) is the F-box domain.

In terms of assembly, part of a SCF (SKP1-cullin-F-box) protein ligase complex. Interacts with SKP1A/ASK1.

Its pathway is protein modification; protein ubiquitination. The polypeptide is F-box protein SKIP5 (SKIP5) (Arabidopsis thaliana (Mouse-ear cress)).